Reading from the N-terminus, the 415-residue chain is Serine/threonine transporter SstT (415 aa).

9 helical membrane passes run 21 to 41 (ILLG…AALA), 45 to 65 (LGTL…LMLV), 83 to 103 (ILFL…VLSV), 142 to 162 (ALLN…GLAF), 193 to 213 (LGIF…ALWG), 217 to 237 (LLMV…PLIV), 299 to 319 (MAGA…TLGI), 331 to 351 (VVAS…LLLI), and 358 to 378 (FGIS…IGVL).

The protein belongs to the dicarboxylate/amino acid:cation symporter (DAACS) (TC 2.A.23) family.

It is found in the cell inner membrane. The catalysed reaction is L-serine(in) + Na(+)(in) = L-serine(out) + Na(+)(out). It carries out the reaction L-threonine(in) + Na(+)(in) = L-threonine(out) + Na(+)(out). In terms of biological role, involved in the import of serine and threonine into the cell, with the concomitant import of sodium (symport system). This chain is Serine/threonine transporter SstT, found in Pectobacterium carotovorum subsp. carotovorum (strain PC1).